Consider the following 284-residue polypeptide: Tropomyosin (284 aa).

Positions 1–284 (MDGIKKKMIA…DQTFAELTGY (284 aa)) form a coiled coil. Residues 111 to 131 (TKLEEASKTAEESERGRKDLE) form a disordered region.

Belongs to the tropomyosin family. In terms of assembly, homodimer.

Tropomyosin, in association with the troponin complex, plays a central role in the calcium dependent regulation of muscle contraction. The sequence is that of Tropomyosin from Schistosoma japonicum (Blood fluke).